A 78-amino-acid polypeptide reads, in one-letter code: Acyl carrier protein (78 aa).

The region spanning 2-77 is the Carrier domain; it reads STIEERVKKI…AAIDYVNSHQ (76 aa). An O-(pantetheine 4'-phosphoryl)serine modification is found at Ser-37.

It belongs to the acyl carrier protein (ACP) family. 4'-phosphopantetheine is transferred from CoA to a specific serine of apo-ACP by AcpS. This modification is essential for activity because fatty acids are bound in thioester linkage to the sulfhydryl of the prosthetic group.

The protein localises to the cytoplasm. The protein operates within lipid metabolism; fatty acid biosynthesis. In terms of biological role, carrier of the growing fatty acid chain in fatty acid biosynthesis. The protein is Acyl carrier protein of Pseudomonas putida (strain W619).